The chain runs to 153 residues: 3-hydroxyacyl-[acyl-carrier-protein] dehydratase FabZ (153 aa).

His53 is a catalytic residue.

The protein belongs to the thioester dehydratase family. FabZ subfamily.

Its subcellular location is the cytoplasm. The catalysed reaction is a (3R)-hydroxyacyl-[ACP] = a (2E)-enoyl-[ACP] + H2O. Functionally, involved in unsaturated fatty acids biosynthesis. Catalyzes the dehydration of short chain beta-hydroxyacyl-ACPs and long chain saturated and unsaturated beta-hydroxyacyl-ACPs. This chain is 3-hydroxyacyl-[acyl-carrier-protein] dehydratase FabZ, found in Lawsonia intracellularis (strain PHE/MN1-00).